Consider the following 426-residue polypeptide: Histidine--tRNA ligase (426 aa).

It belongs to the class-II aminoacyl-tRNA synthetase family.

It is found in the cytoplasm. It carries out the reaction tRNA(His) + L-histidine + ATP = L-histidyl-tRNA(His) + AMP + diphosphate + H(+). The sequence is that of Histidine--tRNA ligase (hisS) from Thermoplasma volcanium (strain ATCC 51530 / DSM 4299 / JCM 9571 / NBRC 15438 / GSS1).